Reading from the N-terminus, the 160-residue chain is Thy-1 membrane glycoprotein (160 aa).

An N-terminal signal peptide occupies residues 1 to 19; sequence MNPTVSIAVILTVLQAAHC. Gln20 is subject to Pyrrolidone carboxylic acid. Residues 20–120 enclose the Ig-like V-type domain; it reads QMIRDLSACL…YTGNQIKNIT (101 aa). 2 disulfide bridges follow: Cys28-Cys129 and Cys38-Cys103. Asn42, Asn78, and Asn118 each carry an N-linked (GlcNAc...) asparagine glycan. Cys129 carries the GPI-anchor amidated cysteine lipid modification. The propeptide at 130 to 160 is removed in mature form; sequence VRLSLLIQNTSWLLLLLLSLPLLQAVDFVSL. Residue Asn138 is glycosylated (N-linked (GlcNAc...) asparagine).

The N-terminus is blocked. In terms of tissue distribution, forebrain, cerebellum and tectum.

It is found in the cell membrane. In terms of biological role, may play a role in cell-cell or cell-ligand interactions during synaptogenesis and other events in the brain. This Gallus gallus (Chicken) protein is Thy-1 membrane glycoprotein (THY1).